The primary structure comprises 83 residues: NAD(P)H-quinone oxidoreductase subunit L (83 aa).

The next 2 helical transmembrane spans lie at 15–35 (LMVL…VPLL) and 53–73 (LSAY…APFL).

The protein belongs to the complex I NdhL subunit family. In terms of assembly, NDH-1 can be composed of about 15 different subunits; different subcomplexes with different compositions have been identified which probably have different functions.

It localises to the cellular thylakoid membrane. It catalyses the reaction a plastoquinone + NADH + (n+1) H(+)(in) = a plastoquinol + NAD(+) + n H(+)(out). The catalysed reaction is a plastoquinone + NADPH + (n+1) H(+)(in) = a plastoquinol + NADP(+) + n H(+)(out). NDH-1 shuttles electrons from an unknown electron donor, via FMN and iron-sulfur (Fe-S) centers, to quinones in the respiratory and/or the photosynthetic chain. The immediate electron acceptor for the enzyme in this species is believed to be plastoquinone. Couples the redox reaction to proton translocation, and thus conserves the redox energy in a proton gradient. Cyanobacterial NDH-1 also plays a role in inorganic carbon-concentration. The sequence is that of NAD(P)H-quinone oxidoreductase subunit L from Prochlorococcus marinus (strain MIT 9303).